We begin with the raw amino-acid sequence, 142 residues long: Transcriptional regulator MraZ (142 aa).

2 SpoVT-AbrB domains span residues 5–51 (ASAL…PRPE) and 77–120 (AMDV…DSQT).

Belongs to the MraZ family. As to quaternary structure, forms oligomers.

Its subcellular location is the cytoplasm. It is found in the nucleoid. The sequence is that of Transcriptional regulator MraZ from Burkholderia ambifaria (strain MC40-6).